We begin with the raw amino-acid sequence, 396 residues long: B2 bradykinin receptor (396 aa).

Over 1 to 65 (MDTRSSLCPK…EWWSWLNAIQ (65 aa)) the chain is Extracellular. N-linked (GlcNAc...) asparagine glycans are attached at residues Asn33 and Asn44. The helical transmembrane segment at 66–89 (APFLWVLFLLAALENIFVLSVFCL) threads the bilayer. The Cytoplasmic segment spans residues 90-98 (HKTNCTVAE). The helical transmembrane segment at 99–123 (IYLGNLAAADLILACGLPFWAITIA) threads the bilayer. Over 124 to 136 (NNFDWLFGEVLCR) the chain is Extracellular. Cys135 and Cys216 are oxidised to a cystine. Residues 137-158 (VVNTMIYMNLYSSICFLMLVSI) form a helical membrane-spanning segment. Over 159 to 180 (DRYLALVKTMSMGRMRGVRWAK) the chain is Cytoplasmic. Tyr161 carries the post-translational modification Phosphotyrosine. A helical transmembrane segment spans residues 181–203 (LYSLVIWSCTLLLSSPMLVFRTM). The Extracellular segment spans residues 204–226 (KDYREEGHNVTACVIVYPSRSWE). The N-linked (GlcNAc...) asparagine glycan is linked to Asn212. Residues 227-253 (VFTNMLLNLVGFLLPLSIITFCTVRIM) traverse the membrane as a helical segment. Residues 254–272 (QVLRNNEMKKFKEVQTEKK) are Cytoplasmic-facing. The helical transmembrane segment at 273–297 (ATVLVLAVLGLFVLCWFPFQISTFL) threads the bilayer. At 298–316 (DTLLRLGVLSGCWNERAVD) the chain is on the extracellular side. Residues 317–340 (IVTQISSYVAYSNSCLNPLVYVIV) traverse the membrane as a helical segment. Over 341–396 (GKRFRKKSREVYQAICRKGGCMGESVQMENSMGTLRTSISVDRQIHKLQDWAGNKQ) the chain is Cytoplasmic. Tyr352 bears the Phosphotyrosine mark. Cys356 is lipidated: S-palmitoyl cysteine. Phosphoserine occurs at positions 365 and 371. The residue at position 374 (Thr374) is a Phosphothreonine. Phosphoserine; by GRK6 is present on residues Ser378 and Ser380.

Belongs to the G-protein coupled receptor 1 family. Bradykinin receptor subfamily. BDKRB2 sub-subfamily. Forms a complex with PECAM1 and GNAQ. Interacts with PECAM1. Post-translationally, diphosphorylation at Ser-365 and Ser-371, at Ser-378 and Ser-380, and at Thr-374 and Ser-380 seem to be correlated pairwise. Palmitoylation at Cys-356 and phosphorylation at Tyr-352 seem to be mutually exclusive. As to expression, uterus, vas deferens, kidney, ileum, heart, testis, lung and brain.

The protein resides in the cell membrane. Receptor for bradykinin. It is associated with G proteins that activate a phosphatidylinositol-calcium second messenger system. This Rattus norvegicus (Rat) protein is B2 bradykinin receptor (Bdkrb2).